The primary structure comprises 295 residues: 33 kDa chaperonin (295 aa).

2 disulfides stabilise this stretch: Cys-237/Cys-239 and Cys-270/Cys-273.

It belongs to the HSP33 family. Post-translationally, under oxidizing conditions two disulfide bonds are formed involving the reactive cysteines. Under reducing conditions zinc is bound to the reactive cysteines and the protein is inactive.

Its subcellular location is the cytoplasm. Functionally, redox regulated molecular chaperone. Protects both thermally unfolding and oxidatively damaged proteins from irreversible aggregation. Plays an important role in the bacterial defense system toward oxidative stress. The protein is 33 kDa chaperonin of Geobacillus sp. (strain WCH70).